Consider the following 78-residue polypeptide: Beta-defensin 105A (78 aa).

An N-terminal signal peptide occupies residues 1-27 (MALIKKTFFFLFAMFFILVQLSSGCQA). 3 cysteine pairs are disulfide-bonded: Cys43/Cys74, Cys53/Cys67, and Cys57/Cys73.

Belongs to the beta-defensin family.

It is found in the secreted. Its function is as follows. Has antimicrobial activity. The sequence is that of Beta-defensin 105A (DEFB105A) from Pan troglodytes (Chimpanzee).